Reading from the N-terminus, the 271-residue chain is Oxamate carbamoyltransferase subunit AllH (271 aa).

It belongs to the AllH family. The OXTCase is composed of 3 subunits, AllF, AllG and AllH. Mg(2+) is required as a cofactor.

The enzyme catalyses oxamate + carbamoyl phosphate = N-carbamoyl-2-oxoglycine + phosphate. The protein operates within nitrogen metabolism; (S)-allantoin degradation. In terms of biological role, component of a carbamoyltransferase involved in the anaerobic nitrogen utilization via the assimilation of allantoin. Catalyzes the conversion of oxalurate (N-carbamoyl-2-oxoglycine) to oxamate and carbamoyl phosphate. The sequence is that of Oxamate carbamoyltransferase subunit AllH from Escherichia coli O157:H7.